The chain runs to 85 residues: Small proline-rich protein 2D (85 aa).

A compositionally biased stretch (low complexity) spans 1–11 (MSYQQQQCKQP). A disordered region spans residues 1–20 (MSYQQQQCKQPCQPPPVCPP). A run of 4 repeats spans residues 21 to 29 (KKCPEPCPP), 30 to 38 (LKCPEPCPP), 39 to 47 (PKCPEPCPP), and 48 to 56 (PKCPEPCPE). Positions 21–56 (KKCPEPCPPLKCPEPCPPPKCPEPCPPPKCPEPCPE) are 4 X 9 AA approximate tandem repeats. A disordered region spans residues 57-85 (PCPPPSCQQKCPPAQPPPPCQQKCPPKSK).

Belongs to the cornifin (SPRR) family. As to expression, expressed in uterus.

It localises to the cytoplasm. Functionally, cross-linked envelope protein of keratinocytes. It is a keratinocyte protein that first appears in the cell cytosol, but ultimately becomes cross-linked to membrane proteins by transglutaminase. All that results in the formation of an insoluble envelope beneath the plasma membrane. The chain is Small proline-rich protein 2D (Sprr2d) from Mus musculus (Mouse).